The primary structure comprises 150 residues: UPF0336 protein SAV_4901 (150 aa).

Residues 8–126 form the MaoC-like domain; sequence VGRSYPPTDP…GNDVVDVRGE (119 aa).

Belongs to the UPF0336 family.

This chain is UPF0336 protein SAV_4901, found in Streptomyces avermitilis (strain ATCC 31267 / DSM 46492 / JCM 5070 / NBRC 14893 / NCIMB 12804 / NRRL 8165 / MA-4680).